The sequence spans 514 residues: ATP synthase subunit alpha (514 aa).

170–177 (GDRQTGKT) provides a ligand contact to ATP.

This sequence belongs to the ATPase alpha/beta chains family. In terms of assembly, F-type ATPases have 2 components, CF(1) - the catalytic core - and CF(0) - the membrane proton channel. CF(1) has five subunits: alpha(3), beta(3), gamma(1), delta(1), epsilon(1). CF(0) has three main subunits: a(1), b(2) and c(9-12). The alpha and beta chains form an alternating ring which encloses part of the gamma chain. CF(1) is attached to CF(0) by a central stalk formed by the gamma and epsilon chains, while a peripheral stalk is formed by the delta and b chains.

It localises to the cell inner membrane. The catalysed reaction is ATP + H2O + 4 H(+)(in) = ADP + phosphate + 5 H(+)(out). Its function is as follows. Produces ATP from ADP in the presence of a proton gradient across the membrane. The alpha chain is a regulatory subunit. The protein is ATP synthase subunit alpha of Acidithiobacillus ferridurans.